The sequence spans 396 residues: Elongation factor Tu 1 (396 aa).

A tr-type G domain is found at 10–206 (KPHCNIGTIG…TVDDYIPQPD (197 aa)). The segment at 19–26 (GHVDHGKT) is G1. A GTP-binding site is contributed by 19 to 26 (GHVDHGKT). Threonine 26 lines the Mg(2+) pocket. Residues 60 to 64 (GITIN) form a G2 region. Residues 81–84 (DCPG) are G3. GTP-binding positions include 81-85 (DCPGH) and 136-139 (NKVD). Residues 136 to 139 (NKVD) are G4. The interval 174–176 (SAK) is G5.

Belongs to the TRAFAC class translation factor GTPase superfamily. Classic translation factor GTPase family. EF-Tu/EF-1A subfamily. As to quaternary structure, monomer.

The protein localises to the cytoplasm. It carries out the reaction GTP + H2O = GDP + phosphate + H(+). Functionally, GTP hydrolase that promotes the GTP-dependent binding of aminoacyl-tRNA to the A-site of ribosomes during protein biosynthesis. This chain is Elongation factor Tu 1, found in Caulobacter sp. (strain K31).